A 196-amino-acid chain; its full sequence is dTTP/UTP pyrophosphatase (196 aa).

Aspartate 78 (proton acceptor) is an active-site residue.

Belongs to the Maf family. YhdE subfamily. A divalent metal cation is required as a cofactor.

Its subcellular location is the cytoplasm. It catalyses the reaction dTTP + H2O = dTMP + diphosphate + H(+). It carries out the reaction UTP + H2O = UMP + diphosphate + H(+). In terms of biological role, nucleoside triphosphate pyrophosphatase that hydrolyzes dTTP and UTP. May have a dual role in cell division arrest and in preventing the incorporation of modified nucleotides into cellular nucleic acids. The polypeptide is dTTP/UTP pyrophosphatase (Photobacterium profundum (strain SS9)).